The sequence spans 320 residues: Cytochrome f (320 aa).

The N-terminal stretch at methionine 1–alanine 35 is a signal peptide. Heme contacts are provided by tyrosine 36, cysteine 56, cysteine 59, and histidine 60. Residues valine 286–lysine 306 traverse the membrane as a helical segment.

It belongs to the cytochrome f family. As to quaternary structure, the 4 large subunits of the cytochrome b6-f complex are cytochrome b6, subunit IV (17 kDa polypeptide, petD), cytochrome f and the Rieske protein, while the 4 small subunits are PetG, PetL, PetM and PetN. The complex functions as a dimer. Heme serves as cofactor.

The protein localises to the plastid. The protein resides in the chloroplast thylakoid membrane. Functionally, component of the cytochrome b6-f complex, which mediates electron transfer between photosystem II (PSII) and photosystem I (PSI), cyclic electron flow around PSI, and state transitions. This chain is Cytochrome f, found in Saccharum hybrid (Sugarcane).